The sequence spans 753 residues: CCR4-NOT transcription complex subunit 3 (753 aa).

Positions 240–534 (ATSPPSHSHM…PPQFSTAPEI (295 aa)) are disordered. Residues 257-268 (SSSTPTSTTSSS) show a composition bias toward low complexity. Residues 284-293 (DDKKRGRSTD) are compositionally biased toward basic and acidic residues. Residue Thr-292 is modified to Phosphothreonine. Positions 294 to 315 (SEVSQSPAKNGSKPVHSNQHPQ) are enriched in polar residues. The residue at position 299 (Ser-299) is a Phosphoserine. Residues 317 to 330 (PAVPPTYPSGPPPA) show a composition bias toward pro residues. Over residues 350-376 (PSALGPKASPAPSHNSGTPAPYAQAVA) the composition is skewed to low complexity. Gly residues predominate over residues 396-408 (SGGGGGGSGGGGS). The segment covering 424–433 (NGATSYSSVV) has biased composition (polar residues). Over residues 441–457 (ALSSSGGNNASSQALGP) the composition is skewed to low complexity. Over residues 458–467 (PSGPHNPPPS) the composition is skewed to pro residues. Gly residues predominate over residues 479–491 (GAGGVAPGSGNNS). A Phosphoserine modification is found at Ser-542. The interval 661–753 (EFYQRLSTET…YRYLEDRDLQ (93 aa)) is repressor domain.

The protein belongs to the CNOT2/3/5 family. As to quaternary structure, component of the CCR4-NOT complex; distinct complexes seem to exist that differ in the participation of probably mutually exclusive catalytic subunits. In the complex interacts directly with CNOT2. Interacts with TIP120B and NANOS2. Interacts with EBF1. Interacts in an RNA-independent manner with BICC1 (via KH domains). Ubiquitous. Highly expressed in brain, heart, thymus, spleen, kidney, liver, small intestine, lung and peripheral blood leukocytes.

The protein localises to the cytoplasm. It localises to the nucleus. It is found in the P-body. Its function is as follows. Component of the CCR4-NOT complex which is one of the major cellular mRNA deadenylases and is linked to various cellular processes including bulk mRNA degradation, miRNA-mediated repression, translational repression during translational initiation and general transcription regulation. Additional complex functions may be a consequence of its influence on mRNA expression. May be involved in metabolic regulation; may be involved in recruitment of the CCR4-NOT complex to deadenylation target mRNAs involved in energy metabolism. Involved in mitotic progression and regulation of the spindle assembly checkpoint by regulating the stability of MAD1L1 mRNA. Can repress transcription and may link the CCR4-NOT complex to transcriptional regulation; the repressive function may involve histone deacetylases. Involved in the maintenance of embryonic stem (ES) cell identity. This chain is CCR4-NOT transcription complex subunit 3, found in Homo sapiens (Human).